A 318-amino-acid polypeptide reads, in one-letter code: Transaldolase (318 aa).

Lys-132 (schiff-base intermediate with substrate) is an active-site residue.

Belongs to the transaldolase family. Type 1 subfamily. In terms of assembly, homodimer.

The protein localises to the cytoplasm. It carries out the reaction D-sedoheptulose 7-phosphate + D-glyceraldehyde 3-phosphate = D-erythrose 4-phosphate + beta-D-fructose 6-phosphate. It functions in the pathway carbohydrate degradation; pentose phosphate pathway; D-glyceraldehyde 3-phosphate and beta-D-fructose 6-phosphate from D-ribose 5-phosphate and D-xylulose 5-phosphate (non-oxidative stage): step 2/3. Its function is as follows. Transaldolase is important for the balance of metabolites in the pentose-phosphate pathway. This Shewanella pealeana (strain ATCC 700345 / ANG-SQ1) protein is Transaldolase.